Consider the following 133-residue polypeptide: Large ribosomal subunit protein bL17 (133 aa).

Belongs to the bacterial ribosomal protein bL17 family. Part of the 50S ribosomal subunit. Contacts protein L32.

This is Large ribosomal subunit protein bL17 from Alteromonas mediterranea (strain DSM 17117 / CIP 110805 / LMG 28347 / Deep ecotype).